Reading from the N-terminus, the 435-residue chain is Methionine aminopeptidase 2 (435 aa).

A disordered region spans residues 1–87; sequence MAAQVADGVA…TQTKPPRVPV (87 aa). A compositionally biased stretch (basic and acidic residues) spans 10–19; that stretch reads ADLKLDDTKS. A compositionally biased stretch (polar residues) spans 20 to 29; sequence KPTNGTTQNG. Positions 32–46 are enriched in acidic residues; the sequence is EHEDSDDDNEGEEGA. The span at 55-68 shows a compositional bias: basic residues; it reads KKKKKRKPRKKKKA. His199 serves as a coordination point for substrate. The a divalent metal cation site is built by Asp219, Asp230, and His299. His307 lines the substrate pocket. Residues Glu332 and Glu427 each contribute to the a divalent metal cation site.

It belongs to the peptidase M24A family. Methionine aminopeptidase eukaryotic type 2 subfamily. Co(2+) serves as cofactor. Zn(2+) is required as a cofactor. It depends on Mn(2+) as a cofactor. Requires Fe(2+) as cofactor.

Its subcellular location is the cytoplasm. It carries out the reaction Release of N-terminal amino acids, preferentially methionine, from peptides and arylamides.. Functionally, cotranslationally removes the N-terminal methionine from nascent proteins. The N-terminal methionine is often cleaved when the second residue in the primary sequence is small and uncharged (Met-Ala-, Cys, Gly, Pro, Ser, Thr, or Val). The protein is Methionine aminopeptidase 2 of Phaeosphaeria nodorum (strain SN15 / ATCC MYA-4574 / FGSC 10173) (Glume blotch fungus).